The primary structure comprises 382 residues: Sad1-interacting factor 2 (382 aa).

Residue Ser135 is modified to Phosphoserine. The chain crosses the membrane as a helical span at residues 356-376 (EWIVVILMGLLVLIALFSIVV).

Belongs to the RMD1/sif2 family. As to quaternary structure, interacts with sad1.

Its subcellular location is the nucleus membrane. Required for sporulation where it is believed to have a role in meiotic nuclear division. The polypeptide is Sad1-interacting factor 2 (sif2) (Schizosaccharomyces pombe (strain 972 / ATCC 24843) (Fission yeast)).